Reading from the N-terminus, the 469-residue chain is Argininosuccinate lyase (469 aa).

The protein belongs to the lyase 1 family. Argininosuccinate lyase subfamily.

It localises to the cytoplasm. The enzyme catalyses 2-(N(omega)-L-arginino)succinate = fumarate + L-arginine. It participates in amino-acid biosynthesis; L-arginine biosynthesis; L-arginine from L-ornithine and carbamoyl phosphate: step 3/3. The sequence is that of Argininosuccinate lyase from Novosphingobium aromaticivorans (strain ATCC 700278 / DSM 12444 / CCUG 56034 / CIP 105152 / NBRC 16084 / F199).